The primary structure comprises 88 residues: UPF0297 protein SSU98_0066 (88 aa).

This sequence belongs to the UPF0297 family.

This chain is UPF0297 protein SSU98_0066, found in Streptococcus suis (strain 98HAH33).